A 926-amino-acid polypeptide reads, in one-letter code: Serine/threonine-protein kinase SIK2 (926 aa).

In terms of domain architecture, Protein kinase spans 20-271 (YDIEGTLGKG…IAQIKEHKWM (252 aa)). A Phosphothreonine modification is found at threonine 25. ATP-binding positions include 26–34 (LGKGNFAVV) and lysine 49. At lysine 53 the chain carries N6-acetyllysine; by EP300. The active-site Proton acceptor is aspartate 142. Residue threonine 175 is modified to Phosphothreonine; by LKB1. Residues 295–335 (EFNEQVLRLMHSLGIDQQKTIESLQNKSYNHFAAIYFLLVE) enclose the UBA domain. Phosphothreonine is present on threonine 484. Phosphoserine occurs at positions 534 and 587. 2 stretches are compositionally biased toward low complexity: residues 644–659 (SSCPQEEVSQQQESVS) and 742–756 (SSYPQPSQQLPLPRQ). Disordered regions lie at residues 644 to 666 (SSCPQEEVSQQQESVSTLPASVH), 742 to 776 (SSYPQPSQQLPLPRQETPPPSQQAPPFSLTQPLSP), and 801 to 896 (PLPS…SSYD). The span at 765 to 774 (APPFSLTQPL) shows a compositional bias: polar residues. Residues 822 to 834 (QPPPPPPPPPPRQ) show a composition bias toward pro residues.

The protein belongs to the protein kinase superfamily. CAMK Ser/Thr protein kinase family. SNF1 subfamily. Interacts with and phosphorylates TORC2/CRTC2. Requires Mg(2+) as cofactor. Post-translationally, phosphorylated at Thr-175 by STK11/LKB1 in complex with STE20-related adapter-alpha (STRADA) pseudo kinase and CAB39. Phosphorylated at Thr-484 in response to insulin in adipocytes. Acetylation at Lys-53 inhibits kinase activity. Deacetylated by HDAC6.

Its subcellular location is the cytoplasm. It localises to the endoplasmic reticulum membrane. The catalysed reaction is L-seryl-[protein] + ATP = O-phospho-L-seryl-[protein] + ADP + H(+). It catalyses the reaction L-threonyl-[protein] + ATP = O-phospho-L-threonyl-[protein] + ADP + H(+). Its activity is regulated as follows. Activated by phosphorylation on Thr-175. Its function is as follows. Serine/threonine-protein kinase that plays a role in many biological processes such as fatty acid oxidation, autophagy, immune response or glucose metabolism. Phosphorylates 'Ser-794' of IRS1 in insulin-stimulated adipocytes, potentially modulating the efficiency of insulin signal transduction. Inhibits CREB activity by phosphorylating and repressing TORCs, the CREB-specific coactivators. Phosphorylates EP300 and thus inhibits its histone acetyltransferase activity. In turn, regulates the DNA-binding ability of several transcription factors such as PPARA or MLXIPL. Also plays a role in thymic T-cell development. The chain is Serine/threonine-protein kinase SIK2 (SIK2) from Homo sapiens (Human).